We begin with the raw amino-acid sequence, 154 residues long: Transcription antitermination protein NusB (154 aa).

This sequence belongs to the NusB family.

Involved in transcription antitermination. Required for transcription of ribosomal RNA (rRNA) genes. Binds specifically to the boxA antiterminator sequence of the ribosomal RNA (rrn) operons. The polypeptide is Transcription antitermination protein NusB (Bordetella parapertussis (strain 12822 / ATCC BAA-587 / NCTC 13253)).